The chain runs to 317 residues: 4-hydroxy-3-methylbut-2-enyl diphosphate reductase (317 aa).

C12 is a [4Fe-4S] cluster binding site. (2E)-4-hydroxy-3-methylbut-2-enyl diphosphate contacts are provided by H41 and H74. Residues H41 and H74 each coordinate dimethylallyl diphosphate. Positions 41 and 74 each coordinate isopentenyl diphosphate. A [4Fe-4S] cluster-binding site is contributed by C96. H124 is a binding site for (2E)-4-hydroxy-3-methylbut-2-enyl diphosphate. Residue H124 coordinates dimethylallyl diphosphate. An isopentenyl diphosphate-binding site is contributed by H124. E126 acts as the Proton donor in catalysis. T168 serves as a coordination point for (2E)-4-hydroxy-3-methylbut-2-enyl diphosphate. C198 is a [4Fe-4S] cluster binding site. S226, S227, N228, and S270 together coordinate (2E)-4-hydroxy-3-methylbut-2-enyl diphosphate. Residues S226, S227, N228, and S270 each contribute to the dimethylallyl diphosphate site. Isopentenyl diphosphate is bound by residues S226, S227, N228, and S270.

This sequence belongs to the IspH family. The cofactor is [4Fe-4S] cluster.

The enzyme catalyses isopentenyl diphosphate + 2 oxidized [2Fe-2S]-[ferredoxin] + H2O = (2E)-4-hydroxy-3-methylbut-2-enyl diphosphate + 2 reduced [2Fe-2S]-[ferredoxin] + 2 H(+). The catalysed reaction is dimethylallyl diphosphate + 2 oxidized [2Fe-2S]-[ferredoxin] + H2O = (2E)-4-hydroxy-3-methylbut-2-enyl diphosphate + 2 reduced [2Fe-2S]-[ferredoxin] + 2 H(+). The protein operates within isoprenoid biosynthesis; dimethylallyl diphosphate biosynthesis; dimethylallyl diphosphate from (2E)-4-hydroxy-3-methylbutenyl diphosphate: step 1/1. It participates in isoprenoid biosynthesis; isopentenyl diphosphate biosynthesis via DXP pathway; isopentenyl diphosphate from 1-deoxy-D-xylulose 5-phosphate: step 6/6. In terms of biological role, catalyzes the conversion of 1-hydroxy-2-methyl-2-(E)-butenyl 4-diphosphate (HMBPP) into a mixture of isopentenyl diphosphate (IPP) and dimethylallyl diphosphate (DMAPP). Acts in the terminal step of the DOXP/MEP pathway for isoprenoid precursor biosynthesis. The polypeptide is 4-hydroxy-3-methylbut-2-enyl diphosphate reductase (Chromohalobacter salexigens (strain ATCC BAA-138 / DSM 3043 / CIP 106854 / NCIMB 13768 / 1H11)).